Reading from the N-terminus, the 124-residue chain is Single-stranded DNA-binding protein (124 aa).

The protein belongs to the phi29likevirus single-strand-binding protein family. Monomer.

Its function is as follows. Single-stranded DNA binding protein required for the elongation during viral DNA replication by strand displacement. Displaced viral DNA strands are transiently coated with the ssDNA-binding protein and therefore protected againt nucleases. The latter is then probably removed by the replisome that performs lagging strand synthesis or during the events that lead up to the recombination process. Has helix-destabilizing activity since it removes secondary structure from the ssDNA in replicative intermediates. This Bacillus subtilis (Bacteriophage PZA) protein is Single-stranded DNA-binding protein (5).